The sequence spans 1464 residues: Gag-Pol polyprotein (1464 aa).

A lipid anchor (N-myristoyl glycine; by host) is attached at glycine 2. The segment at 7 to 31 (VLRGKKADELERIRLRPGGKKKYRL) is interaction with Gp41. Residues 16–22 (LERIRLR) carry the Nuclear export signal motif. Positions 26–32 (KKKYRLK) match the Nuclear localization signal motif. The interval 111-136 (ETGTAEKMPSTSRPTAPSSEKGGNYP) is disordered. Over residues 119–128 (PSTSRPTAPS) the composition is skewed to polar residues. At tyrosine 135 the chain carries Phosphotyrosine; by host. Positions 191–228 (NCVGDHQAAMQIIREIINEEAAEWDVQHPIPGPLPAGQ) are interaction with human PPIA/CYPA and NUP153. The dimerization/Multimerization of capsid protein p24 stretch occupies residues 279 to 365 (YNPTNILDIK…GGPGQKARLM (87 aa)). 2 CCHC-type zinc fingers span residues 389–406 (FKCW…QCRA) and 410–427 (QGCW…NCPD). Positions 432–500 (FLRTGPLGKE…RGLTAPRAGG (69 aa)) are disordered. Residues 456 to 469 (TNSTPSGSSSGSTG) show a composition bias toward low complexity. The span at 473 to 485 (AAREKTERAERET) shows a compositional bias: basic and acidic residues. Positions 514–518 (PQFSL) are dimerization of protease. The 70-residue stretch at 533–602 (VEVLLDTGAD…TPINIFGRNI (70 aa)) folds into the Peptidase A2 domain. Residue aspartate 538 is the For protease activity; shared with dimeric partner of the active site. Dimerization of protease stretches follow at residues 562-568 (GIGGFIN) and 601-613 (NILT…LNLP). Positions 656–846 (EGQLEEAPPT…PPYHWMGYEL (191 aa)) constitute a Reverse transcriptase domain. Aspartate 722, aspartate 797, and aspartate 798 together coordinate Mg(2+). An RT 'primer grip' region spans residues 839–847 (YHWMGYELW). Positions 1009-1025 (WEQWWDNYWQVTWIPDW) match the Tryptophan repeat motif motif. The region spanning 1045-1168 (IPGAETFYTD…VDHLVSQGIR (124 aa)) is the RNase H type-1 domain. Mg(2+) contacts are provided by aspartate 1054, glutamate 1089, aspartate 1109, and aspartate 1160. An Integrase-type zinc finger spans residues 1174 to 1215 (EKIEPAQEEHEKYHSNVKELSHKFGIPNLVARQIVNSCAQCQ). Histidine 1183, histidine 1187, cysteine 1211, and cysteine 1214 together coordinate Zn(2+). The Integrase catalytic domain maps to 1224-1375 (QVNAELGTWQ…TPSERLINMI (152 aa)). Residues aspartate 1235, aspartate 1287, and glutamate 1323 each contribute to the Mg(2+) site. The segment at residues 1394-1441 (FRVYFREGRDQLWKGPGELLWKGEGAVLVKVGTDIKIIPRRKAKIIRD) is a DNA-binding region (integrase-type).

Homotrimer; further assembles as hexamers of trimers. Interacts with gp41 (via C-terminus). Interacts with host CALM1; this interaction induces a conformational change in the Matrix protein, triggering exposure of the myristate group. Interacts with host AP3D1; this interaction allows the polyprotein trafficking to multivesicular bodies during virus assembly. Part of the pre-integration complex (PIC) which is composed of viral genome, matrix protein, Vpr and integrase. As to quaternary structure, homodimer; the homodimer further multimerizes as homohexamers or homopentamers. Interacts with human PPIA/CYPA. Interacts with human NUP153. Interacts with host PDZD8; this interaction stabilizes the capsid. Interacts with monkey TRIM5; this interaction destabilizes the capsid. In terms of assembly, homodimer, whose active site consists of two apposed aspartic acid residues. Heterodimer of p66 RT and p51 RT (RT p66/p51). Heterodimerization of RT is essential for DNA polymerase activity. The overall folding of the subdomains is similar in p66 RT and p51 RT but the spatial arrangements of the subdomains are dramatically different. As to quaternary structure, homotetramer; may further associate as a homohexadecamer. Part of the pre-integration complex (PIC) which is composed of viral genome, matrix protein, Vpr and integrase. Interacts with human SMARCB1/INI1 and human PSIP1/LEDGF isoform 1. Interacts with human KPNA3; this interaction might play a role in nuclear import of the pre-integration complex. Interacts with human NUP153; this interaction might play a role in nuclear import of the pre-integration complex. It depends on Mg(2+) as a cofactor. Specific enzymatic cleavages by the viral protease yield mature proteins. The protease is released by autocatalytic cleavage. The polyprotein is cleaved during and after budding, this process is termed maturation. Proteolytic cleavage of p66 RT removes the RNase H domain to yield the p51 RT subunit. Nucleocapsid protein p7 might be further cleaved after virus entry.

It is found in the host cell membrane. The protein resides in the host endosome. The protein localises to the host multivesicular body. It localises to the virion membrane. Its subcellular location is the host nucleus. It is found in the host cytoplasm. The protein resides in the virion. It carries out the reaction Endopeptidase for which the P1 residue is preferably hydrophobic.. The catalysed reaction is Endohydrolysis of RNA in RNA/DNA hybrids. Three different cleavage modes: 1. sequence-specific internal cleavage of RNA. Human immunodeficiency virus type 1 and Moloney murine leukemia virus enzymes prefer to cleave the RNA strand one nucleotide away from the RNA-DNA junction. 2. RNA 5'-end directed cleavage 13-19 nucleotides from the RNA end. 3. DNA 3'-end directed cleavage 15-20 nucleotides away from the primer terminus.. It catalyses the reaction 3'-end directed exonucleolytic cleavage of viral RNA-DNA hybrid.. The enzyme catalyses DNA(n) + a 2'-deoxyribonucleoside 5'-triphosphate = DNA(n+1) + diphosphate. Protease: The viral protease is inhibited by many synthetic protease inhibitors (PIs), such as amprenavir, atazanavir, indinavir, loprinavir, nelfinavir, ritonavir and saquinavir. Use of protease inhibitors in tritherapy regimens permit more ambitious therapeutic strategies. Reverse transcriptase/ribonuclease H: RT can be inhibited either by nucleoside RT inhibitors (NRTIs) or by non nucleoside RT inhibitors (NNRTIs). NRTIs act as chain terminators, whereas NNRTIs inhibit DNA polymerization by binding a small hydrophobic pocket near the RT active site and inducing an allosteric change in this region. Classical NRTIs are abacavir, adefovir (PMEA), didanosine (ddI), lamivudine (3TC), stavudine (d4T), tenofovir (PMPA), zalcitabine (ddC), and zidovudine (AZT). Classical NNRTIs are atevirdine (BHAP U-87201E), delavirdine, efavirenz (DMP-266), emivirine (I-EBU), and nevirapine (BI-RG-587). The tritherapies used as a basic effective treatment of AIDS associate two NRTIs and one NNRTI. Its function is as follows. Mediates, with Gag polyprotein, the essential events in virion assembly, including binding the plasma membrane, making the protein-protein interactions necessary to create spherical particles, recruiting the viral Env proteins, and packaging the genomic RNA via direct interactions with the RNA packaging sequence (Psi). Gag-Pol polyprotein may regulate its own translation, by the binding genomic RNA in the 5'-UTR. At low concentration, the polyprotein would promote translation, whereas at high concentration, the polyprotein would encapsidate genomic RNA and then shut off translation. Targets the polyprotein to the plasma membrane via a multipartite membrane-binding signal, that includes its myristoylated N-terminus. Matrix protein is part of the pre-integration complex. Implicated in the release from host cell mediated by Vpu. Binds to RNA. In terms of biological role, forms the conical core that encapsulates the genomic RNA-nucleocapsid complex in the virion. Most core are conical, with only 7% tubular. The core is constituted by capsid protein hexamer subunits. The core is disassembled soon after virion entry. Host restriction factors such as TRIM5-alpha or TRIMCyp bind retroviral capsids and cause premature capsid disassembly, leading to blocks in reverse transcription. Capsid restriction by TRIM5 is one of the factors which restricts HIV-1 to the human species. Host PIN1 apparently facilitates the virion uncoating. On the other hand, interactions with PDZD8 or CYPA stabilize the capsid. Functionally, encapsulates and protects viral dimeric unspliced genomic RNA (gRNA). Binds these RNAs through its zinc fingers. Acts as a nucleic acid chaperone which is involved in rearangement of nucleic acid secondary structure during gRNA retrotranscription. Also facilitates template switch leading to recombination. As part of the polyprotein, participates in gRNA dimerization, packaging, tRNA incorporation and virion assembly. Its function is as follows. Aspartyl protease that mediates proteolytic cleavages of Gag and Gag-Pol polyproteins during or shortly after the release of the virion from the plasma membrane. Cleavages take place as an ordered, step-wise cascade to yield mature proteins. This process is called maturation. Displays maximal activity during the budding process just prior to particle release from the cell. Also cleaves Nef and Vif, probably concomitantly with viral structural proteins on maturation of virus particles. Hydrolyzes host EIF4GI and PABP1 in order to shut off the capped cellular mRNA translation. The resulting inhibition of cellular protein synthesis serves to ensure maximal viral gene expression and to evade host immune response. Multifunctional enzyme that converts the viral RNA genome into dsDNA in the cytoplasm, shortly after virus entry into the cell. This enzyme displays a DNA polymerase activity that can copy either DNA or RNA templates, and a ribonuclease H (RNase H) activity that cleaves the RNA strand of RNA-DNA heteroduplexes in a partially processive 3' to 5' endonucleasic mode. Conversion of viral genomic RNA into dsDNA requires many steps. A tRNA(3)-Lys binds to the primer-binding site (PBS) situated at the 5'-end of the viral RNA. RT uses the 3' end of the tRNA primer to perform a short round of RNA-dependent minus-strand DNA synthesis. The reading proceeds through the U5 region and ends after the repeated (R) region which is present at both ends of viral RNA. The portion of the RNA-DNA heteroduplex is digested by the RNase H, resulting in a ssDNA product attached to the tRNA primer. This ssDNA/tRNA hybridizes with the identical R region situated at the 3' end of viral RNA. This template exchange, known as minus-strand DNA strong stop transfer, can be either intra- or intermolecular. RT uses the 3' end of this newly synthesized short ssDNA to perform the RNA-dependent minus-strand DNA synthesis of the whole template. RNase H digests the RNA template except for two polypurine tracts (PPTs) situated at the 5'-end and near the center of the genome. It is not clear if both polymerase and RNase H activities are simultaneous. RNase H probably can proceed both in a polymerase-dependent (RNA cut into small fragments by the same RT performing DNA synthesis) and a polymerase-independent mode (cleavage of remaining RNA fragments by free RTs). Secondly, RT performs DNA-directed plus-strand DNA synthesis using the PPTs that have not been removed by RNase H as primers. PPTs and tRNA primers are then removed by RNase H. The 3' and 5' ssDNA PBS regions hybridize to form a circular dsDNA intermediate. Strand displacement synthesis by RT to the PBS and PPT ends produces a blunt ended, linear dsDNA copy of the viral genome that includes long terminal repeats (LTRs) at both ends. In terms of biological role, catalyzes viral DNA integration into the host chromosome, by performing a series of DNA cutting and joining reactions. This enzyme activity takes place after virion entry into a cell and reverse transcription of the RNA genome in dsDNA. The first step in the integration process is 3' processing. This step requires a complex comprising the viral genome, matrix protein, Vpr and integrase. This complex is called the pre-integration complex (PIC). The integrase protein removes 2 nucleotides from each 3' end of the viral DNA, leaving recessed CA OH's at the 3' ends. In the second step, the PIC enters cell nucleus. This process is mediated through integrase and Vpr proteins, and allows the virus to infect a non dividing cell. This ability to enter the nucleus is specific of lentiviruses, other retroviruses cannot and rely on cell division to access cell chromosomes. In the third step, termed strand transfer, the integrase protein joins the previously processed 3' ends to the 5' ends of strands of target cellular DNA at the site of integration. The 5'-ends are produced by integrase-catalyzed staggered cuts, 5 bp apart. A Y-shaped, gapped, recombination intermediate results, with the 5'-ends of the viral DNA strands and the 3' ends of target DNA strands remaining unjoined, flanking a gap of 5 bp. The last step is viral DNA integration into host chromosome. This involves host DNA repair synthesis in which the 5 bp gaps between the unjoined strands are filled in and then ligated. Since this process occurs at both cuts flanking the HIV genome, a 5 bp duplication of host DNA is produced at the ends of HIV-1 integration. Alternatively, Integrase may catalyze the excision of viral DNA just after strand transfer, this is termed disintegration. The polypeptide is Gag-Pol polyprotein (gag-pol) (Homo sapiens (Human)).